We begin with the raw amino-acid sequence, 260 residues long: Exosome complex component Rrp42 (260 aa).

This sequence belongs to the RNase PH family. Rrp42 subfamily. As to quaternary structure, component of the archaeal exosome complex. Forms a hexameric ring-like arrangement composed of 3 Rrp41-Rrp42 heterodimers. The hexameric ring associates with a trimer of Rrp4 and/or Csl4 subunits.

It is found in the cytoplasm. In terms of biological role, non-catalytic component of the exosome, which is a complex involved in RNA degradation. Contributes to the structuring of the Rrp41 active site. In Methanocella arvoryzae (strain DSM 22066 / NBRC 105507 / MRE50), this protein is Exosome complex component Rrp42.